Reading from the N-terminus, the 131-residue chain is Sperm microtubule inner protein 11 (131 aa).

The interval 18–44 (KKRNTTEETNQKEPEPTRLPPIISKDG) is disordered. Residues 21-33 (NTTEETNQKEPEP) show a composition bias toward basic and acidic residues.

Microtubule inner protein component of sperm flagellar doublet microtubules.

Its subcellular location is the cytoplasm. It is found in the cytoskeleton. The protein localises to the flagellum axoneme. Its function is as follows. Microtubule inner protein (MIP) part of the dynein-decorated doublet microtubules (DMTs) in flagellum axoneme. May serve to reinforce and thus stabilize the microtubule structure in the sperm flagella. The polypeptide is Sperm microtubule inner protein 11 (Homo sapiens (Human)).